The primary structure comprises 349 residues: Zinc-type alcohol dehydrogenase-like protein PB24D3.08c (349 aa).

It belongs to the zinc-containing alcohol dehydrogenase family. Quinone oxidoreductase subfamily.

It is found in the cytoplasm. Its subcellular location is the nucleus. The polypeptide is Zinc-type alcohol dehydrogenase-like protein PB24D3.08c (Schizosaccharomyces pombe (strain 972 / ATCC 24843) (Fission yeast)).